Consider the following 558-residue polypeptide: Outer membrane transporter CdiB (558 aa).

Positions Met-1 to Ser-25 are cleaved as a signal peptide. Residues Asn-34–Gln-62 are a coiled coil. The 76-residue stretch at Phe-76–Gly-151 folds into the POTRA domain.

This sequence belongs to the TPS (TC 1.B.20) family.

It is found in the cell outer membrane. Probable outer membrane protein component of a toxin-immunity protein module, which functions as a cellular contact-dependent growth inhibition (CDI) system. CDI modules allow bacteria to communicate with and inhibit the growth of closely related neighboring bacteria in a contact-dependent fashion. This protein may be required for secretion and assembly of the CdiA toxin. Its function is as follows. Probable member of a two partner secretion pathway (TPS) in which it mediates the secretion of CdiA. This is Outer membrane transporter CdiB (cdiB) from Dickeya dadantii (strain 3937) (Erwinia chrysanthemi (strain 3937)).